We begin with the raw amino-acid sequence, 297 residues long: Phosphoribosylaminoimidazole-succinocarboxamide synthase (297 aa).

Belongs to the SAICAR synthetase family.

The enzyme catalyses 5-amino-1-(5-phospho-D-ribosyl)imidazole-4-carboxylate + L-aspartate + ATP = (2S)-2-[5-amino-1-(5-phospho-beta-D-ribosyl)imidazole-4-carboxamido]succinate + ADP + phosphate + 2 H(+). It participates in purine metabolism; IMP biosynthesis via de novo pathway; 5-amino-1-(5-phospho-D-ribosyl)imidazole-4-carboxamide from 5-amino-1-(5-phospho-D-ribosyl)imidazole-4-carboxylate: step 1/2. The polypeptide is Phosphoribosylaminoimidazole-succinocarboxamide synthase (Methylococcus capsulatus (strain ATCC 33009 / NCIMB 11132 / Bath)).